Reading from the N-terminus, the 354-residue chain is Protein-arginine kinase (354 aa).

The Phosphagen kinase C-terminal domain maps to Ile-24 to Ala-254. ATP is bound by residues Ser-27 to Arg-31, His-92, Arg-125, Arg-176 to Met-180, and Arg-207 to Glu-212. Residues Arg-337 to Ala-342 carry the RDXXRA motif of the pArg binding pocket involved in allosteric regulation motif.

The protein belongs to the ATP:guanido phosphotransferase family.

The catalysed reaction is L-arginyl-[protein] + ATP = N(omega)-phospho-L-arginyl-[protein] + ADP + H(+). Appears to be allosterically activated by the binding of pArg-containing polypeptides to the pArg-binding pocket localized in the C-terminal domain of McsB. Its function is as follows. Catalyzes the specific phosphorylation of arginine residues in a large number of proteins. Is part of the bacterial stress response system. Protein arginine phosphorylation has a physiologically important role and is involved in the regulation of many critical cellular processes, such as protein homeostasis, motility, competence, and stringent and stress responses, by regulating gene expression and protein activity. In Bacillus cereus (strain AH187), this protein is Protein-arginine kinase.